We begin with the raw amino-acid sequence, 122 residues long: Large ribosomal subunit protein uL14 (122 aa).

This sequence belongs to the universal ribosomal protein uL14 family. Part of the 50S ribosomal subunit. Forms a cluster with proteins L3 and L19. In the 70S ribosome, L14 and L19 interact and together make contacts with the 16S rRNA in bridges B5 and B8.

Binds to 23S rRNA. Forms part of two intersubunit bridges in the 70S ribosome. In Dehalococcoides mccartyi (strain ATCC BAA-2266 / KCTC 15142 / 195) (Dehalococcoides ethenogenes (strain 195)), this protein is Large ribosomal subunit protein uL14.